A 292-amino-acid polypeptide reads, in one-letter code: Homoserine kinase (292 aa).

ATP is bound at residue 84–94 (PFSRGLGSSSA).

It belongs to the GHMP kinase family. Homoserine kinase subfamily.

It is found in the cytoplasm. The enzyme catalyses L-homoserine + ATP = O-phospho-L-homoserine + ADP + H(+). It participates in amino-acid biosynthesis; L-threonine biosynthesis; L-threonine from L-aspartate: step 4/5. Functionally, catalyzes the ATP-dependent phosphorylation of L-homoserine to L-homoserine phosphate. This Campylobacter hominis (strain ATCC BAA-381 / DSM 21671 / CCUG 45161 / LMG 19568 / NCTC 13146 / CH001A) protein is Homoserine kinase.